The primary structure comprises 161 residues: 2-C-methyl-D-erythritol 2,4-cyclodiphosphate synthase (161 aa).

Asp10 and His12 together coordinate a divalent metal cation. 4-CDP-2-C-methyl-D-erythritol 2-phosphate contacts are provided by residues 10–12 and 36–37; these read DVH and HS. His44 contributes to the a divalent metal cation binding site. 4-CDP-2-C-methyl-D-erythritol 2-phosphate is bound by residues 58–60, 63–67, and Arg144; these read DIG and FSDTD.

The protein belongs to the IspF family. Homotrimer. It depends on a divalent metal cation as a cofactor.

The catalysed reaction is 4-CDP-2-C-methyl-D-erythritol 2-phosphate = 2-C-methyl-D-erythritol 2,4-cyclic diphosphate + CMP. Its pathway is isoprenoid biosynthesis; isopentenyl diphosphate biosynthesis via DXP pathway; isopentenyl diphosphate from 1-deoxy-D-xylulose 5-phosphate: step 4/6. Functionally, involved in the biosynthesis of isopentenyl diphosphate (IPP) and dimethylallyl diphosphate (DMAPP), two major building blocks of isoprenoid compounds. Catalyzes the conversion of 4-diphosphocytidyl-2-C-methyl-D-erythritol 2-phosphate (CDP-ME2P) to 2-C-methyl-D-erythritol 2,4-cyclodiphosphate (ME-CPP) with a corresponding release of cytidine 5-monophosphate (CMP). The polypeptide is 2-C-methyl-D-erythritol 2,4-cyclodiphosphate synthase (Burkholderia ambifaria (strain ATCC BAA-244 / DSM 16087 / CCUG 44356 / LMG 19182 / AMMD) (Burkholderia cepacia (strain AMMD))).